A 318-amino-acid polypeptide reads, in one-letter code: Epithelial-stromal interaction protein 1 (318 aa).

The disordered stretch occupies residues M1–G60. Coiled-coil stretches lie at residues N73–Y188 and L240–E280.

As to expression, highly expressed in placenta, small intestine, spleen, kidney, thymus, liver, salivary gland and testes. Weakly expressed in breast, skeletal muscle and colon. Highly expressed in breast cancer upon interaction between tumor cells and stromal cells in vitro. Expressed in blood mononuclear cells from patients with systemic lupus erythematosus (SLE).

In terms of biological role, plays a role in M1 macrophage polarization and is required for the proper regulation of gene expression during M1 versus M2 macrophage differentiation. Might play a role in RELA/p65 and STAT1 phosphorylation and nuclear localization upon activation of macrophages. The chain is Epithelial-stromal interaction protein 1 (EPSTI1) from Homo sapiens (Human).